A 332-amino-acid polypeptide reads, in one-letter code: Transaldolase (332 aa).

Residue Lys-136 is the Schiff-base intermediate with substrate of the active site.

It belongs to the transaldolase family. Type 1 subfamily.

The protein localises to the cytoplasm. The enzyme catalyses D-sedoheptulose 7-phosphate + D-glyceraldehyde 3-phosphate = D-erythrose 4-phosphate + beta-D-fructose 6-phosphate. It functions in the pathway carbohydrate degradation; pentose phosphate pathway; D-glyceraldehyde 3-phosphate and beta-D-fructose 6-phosphate from D-ribose 5-phosphate and D-xylulose 5-phosphate (non-oxidative stage): step 2/3. Its function is as follows. Transaldolase is important for the balance of metabolites in the pentose-phosphate pathway. The protein is Transaldolase of Nostoc sp. (strain PCC 7120 / SAG 25.82 / UTEX 2576).